The following is a 414-amino-acid chain: Serine/threonine-protein kinase 32B (414 aa).

One can recognise a Protein kinase domain in the interval 23–283 (FQILRAIGKG…LHDIQSVPYL (261 aa)). Residues 29-37 (IGKGSFGKV) and K52 contribute to the ATP site. D146 acts as the Proton acceptor in catalysis. The disordered stretch occupies residues 374 to 396 (QGQGSQLLDTDSRGGGQAQSKLQ).

It belongs to the protein kinase superfamily. Ser/Thr protein kinase family. The cofactor is Mg(2+).

The enzyme catalyses L-seryl-[protein] + ATP = O-phospho-L-seryl-[protein] + ADP + H(+). It catalyses the reaction L-threonyl-[protein] + ATP = O-phospho-L-threonyl-[protein] + ADP + H(+). In Homo sapiens (Human), this protein is Serine/threonine-protein kinase 32B.